A 178-amino-acid polypeptide reads, in one-letter code: Large ribosomal subunit protein eL20x (178 aa).

The protein belongs to the eukaryotic ribosomal protein eL20 family.

The polypeptide is Large ribosomal subunit protein eL20x (RPL18AC) (Arabidopsis thaliana (Mouse-ear cress)).